Here is a 215-residue protein sequence, read N- to C-terminus: Small ribosomal subunit protein eS1 (215 aa).

Belongs to the eukaryotic ribosomal protein eS1 family.

The protein is Small ribosomal subunit protein eS1 of Halorubrum lacusprofundi (strain ATCC 49239 / DSM 5036 / JCM 8891 / ACAM 34).